The sequence spans 1452 residues: ABC multidrug transporter A-1 (1452 aa).

The segment at 1 to 20 (MNESHEAGKNSSTNVEEREE) is disordered. N-linked (GlcNAc...) asparagine glycans are attached at residues asparagine 2, asparagine 10, asparagine 228, asparagine 287, and asparagine 311. One can recognise an ABC transporter 1 domain in the interval 110-363 (LKTLSLARIA…FLQMGFVCPD (254 aa)). 6 helical membrane passes run 474 to 494 (VTIS…SIFY), 508 to 528 (ALLF…MLTL), 554 to 574 (MIMD…VLYF), 583 to 603 (GAFF…SMFF), 616 to 636 (VLPF…FAIP), and 725 to 745 (IGVI…ATDF). Residues 802 to 1044 (FQWKDVCFDI…ILIDYFVRNG (243 aa)) form the ABC transporter 2 domain. 838–845 (GVSGAGKT) provides a ligand contact to ATP. Transmembrane regions (helical) follow at residues 1153 to 1173 (ALCV…PNTI), 1183 to 1203 (IFML…HFVA), 1223 to 1243 (FLIA…VLMF), 1271 to 1291 (LMIW…IAAF), 1297 to 1317 (AGNL…VLAT), and 1324 to 1344 (FWIF…MLSV). Asparagine 1350, asparagine 1365, and asparagine 1391 each carry an N-linked (GlcNAc...) asparagine glycan. The helical transmembrane segment at 1418-1438 (FGLMWVFIVFNIFAACSLYWW) threads the bilayer.

Belongs to the ABC transporter superfamily. ABCG family. PDR (TC 3.A.1.205) subfamily.

The protein localises to the membrane. In terms of biological role, ABC transporter that seems not to be involved in the efflux of toxic substances, at least not the classical compounds such as itraconazole, amphotericin B, voriconazole, posaconazole, ravuconazole, or echinocandins. This chain is ABC multidrug transporter A-1, found in Aspergillus fumigatus (strain ATCC MYA-4609 / CBS 101355 / FGSC A1100 / Af293) (Neosartorya fumigata).